Consider the following 434-residue polypeptide: Serine hydroxymethyltransferase (434 aa).

(6S)-5,6,7,8-tetrahydrofolate-binding positions include Leu-128 and 132–134 (GHL). An N6-(pyridoxal phosphate)lysine modification is found at Lys-237.

This sequence belongs to the SHMT family. Homodimer. Pyridoxal 5'-phosphate is required as a cofactor.

Its subcellular location is the cytoplasm. It catalyses the reaction (6R)-5,10-methylene-5,6,7,8-tetrahydrofolate + glycine + H2O = (6S)-5,6,7,8-tetrahydrofolate + L-serine. It functions in the pathway one-carbon metabolism; tetrahydrofolate interconversion. The protein operates within amino-acid biosynthesis; glycine biosynthesis; glycine from L-serine: step 1/1. Functionally, catalyzes the reversible interconversion of serine and glycine with tetrahydrofolate (THF) serving as the one-carbon carrier. This reaction serves as the major source of one-carbon groups required for the biosynthesis of purines, thymidylate, methionine, and other important biomolecules. Also exhibits THF-independent aldolase activity toward beta-hydroxyamino acids, producing glycine and aldehydes, via a retro-aldol mechanism. In Corynebacterium glutamicum (strain R), this protein is Serine hydroxymethyltransferase.